Reading from the N-terminus, the 315-residue chain is Lipoyl synthase (315 aa).

The [4Fe-4S] cluster site is built by Cys62, Cys67, Cys73, Cys88, Cys92, Cys95, and Ser302. Residues 74-291 (FGKGTATFMI…ETEALAMGFK (218 aa)) form the Radical SAM core domain.

This sequence belongs to the radical SAM superfamily. Lipoyl synthase family. Requires [4Fe-4S] cluster as cofactor.

The protein resides in the cytoplasm. It carries out the reaction [[Fe-S] cluster scaffold protein carrying a second [4Fe-4S](2+) cluster] + N(6)-octanoyl-L-lysyl-[protein] + 2 oxidized [2Fe-2S]-[ferredoxin] + 2 S-adenosyl-L-methionine + 4 H(+) = [[Fe-S] cluster scaffold protein] + N(6)-[(R)-dihydrolipoyl]-L-lysyl-[protein] + 4 Fe(3+) + 2 hydrogen sulfide + 2 5'-deoxyadenosine + 2 L-methionine + 2 reduced [2Fe-2S]-[ferredoxin]. It functions in the pathway protein modification; protein lipoylation via endogenous pathway; protein N(6)-(lipoyl)lysine from octanoyl-[acyl-carrier-protein]: step 2/2. Functionally, catalyzes the radical-mediated insertion of two sulfur atoms into the C-6 and C-8 positions of the octanoyl moiety bound to the lipoyl domains of lipoate-dependent enzymes, thereby converting the octanoylated domains into lipoylated derivatives. The sequence is that of Lipoyl synthase from Aromatoleum aromaticum (strain DSM 19018 / LMG 30748 / EbN1) (Azoarcus sp. (strain EbN1)).